The sequence spans 196 residues: CASP-like protein 2A2 (196 aa).

Residues 1-26 (MAQGKESVSVVEMEGSGNGPAVEMRH) lie on the Cytoplasmic side of the membrane. Residues 27–47 (FETLFRLLPVGLCISALVLML) traverse the membrane as a helical segment. Over 48-68 (KSEQSDQYMQLDYSNVDAFRC) the chain is Extracellular. A helical membrane pass occupies residues 69–89 (LAYANGICAGYSLISAFDSMV). Topologically, residues 90 to 98 (PVSHHISRS) are cytoplasmic. The helical transmembrane segment at 99–119 (WILFLLDQGITYLMLAGGAVA) threads the bilayer. At 120-148 (TQVLYVAYKGDEKATWEQICGSYGRFCNR) the chain is on the extracellular side. A helical transmembrane segment spans residues 149–169 (AGASVIISFFALVCFLLLSLL). Over 170–196 (SAYRLFSKYDPPIHGGAKLEDQTTAQI) the chain is Cytoplasmic.

Belongs to the Casparian strip membrane proteins (CASP) family. In terms of assembly, homodimer and heterodimers.

The protein localises to the cell membrane. The polypeptide is CASP-like protein 2A2 (Picea sitchensis (Sitka spruce)).